A 3029-amino-acid chain; its full sequence is Polycystin-1-related protein (3029 aa).

The signal sequence occupies residues 1 to 21; the sequence is MAKHLYLAFSLILVPFLVSKA. Over 22–1685 the chain is Extracellular; it reads KQTSNGEVPW…RDTDKLKNSP (1664 aa). A WSC domain is found at 29–121; that stretch reads VPWLVGCYRY…KNVASVYSTA (93 aa). PKD domains lie at 364 to 450 and 546 to 634; these read EGHC…IKGV and DHLF…PECY. An REJ domain is found at 633 to 1476; the sequence is CYTRGVAIVG…NPYFSDMNHT (844 aa). Disordered stretches follow at residues 754 to 773, 909 to 931, and 989 to 1051; these read RKGP…HPDE, CPSD…SNSP, and TSAI…PNKP. Polar residues predominate over residues 918-931; it reads VTPSTTPMTDSNSP. Residues 997 to 1013 show a composition bias toward acidic residues; that stretch reads SGDVDDDEVNNDNDDDS. A compositionally biased stretch (polar residues) spans 1020–1047; it reads TLPTPLSMTNANSVNKPIITTDTPSFNK. One can recognise a GAIN-B domain in the interval 1525–1671; the sequence is RNVHVINQTA…GFIQPPNSLH (147 aa). 2 disulfide bridges follow: Cys1624–Cys1651 and Cys1639–Cys1653. A GPS region spans residues 1624 to 1671; it reads CFYWNKRGKHWASDGCRLEKSINHTLVCRCNHLTAFSGGFIQPPNSLH. A helical transmembrane segment spans residues 1686 to 1706; that stretch reads LTMVLVISILVMYFLLLGFCV. At 1707 to 1895 the chain is on the cytoplasmic side; the sequence is KADRHDKKKL…SYSRFTRAQR (189 aa). One can recognise a PLAT domain in the interval 1733-1851; the sequence is SRFQLSVQTG…GNGKVECELF (119 aa). Residues 1896–1916 traverse the membrane as a helical segment; that stretch reads LSCCLSLLLSFLCVNIAWYRP. Residues 1917–1933 are Extracellular-facing; sequence KIEVTEVLGVLDVSANS. Residues 1934–1954 form a helical membrane-spanning segment; sequence IMIGVLGSLMVLPVNFLWIFF. At 1955 to 2101 the chain is on the cytoplasmic side; it reads FRYSRRSLSR…YRSKFSLPHG (147 aa). Residues 2102 to 2122 traverse the membrane as a helical segment; it reads FVYVAWFGCLITGTVTSAITI. The Extracellular segment spans residues 2123–2140; sequence WYGLSFGWDLSVHWFQSL. A helical membrane pass occupies residues 2141–2161; that stretch reads VFSLLESLLLSQPIMVLAFIF. The Cytoplasmic segment spans residues 2162–2250; that stretch reads YMSHKTKSGK…SLKNRVLRNY (89 aa). Residues 2251-2271 form a helical membrane-spanning segment; that stretch reads VVELFVFIMFFVVTCALVFSV. The Extracellular portion of the chain corresponds to 2272–2462; the sequence is ADPDVYHLNQ…GYSYFIRFTK (191 aa). Residues 2463–2483 form a helical membrane-spanning segment; it reads LLFVVFFLYLLQHEFFLALKM. The Cytoplasmic portion of the chain corresponds to 2484–2496; that stretch reads TFSYFTNFWRVYQ. A helical membrane pass occupies residues 2497-2517; it reads LLTIAISSACIVSYIHWSLSL. Over 2518 to 2538 the chain is Extracellular; it reads YALLREVETERQSRVFYLSRQ. The chain crosses the membrane as a helical span at residues 2539 to 2559; it reads ISWSQGFLQASYSLLLFLLLI. At 2560–2586 the chain is on the cytoplasmic side; that stretch reads RCLHLLRPFRFVRHFGRILSTSISSLL. A helical membrane pass occupies residues 2587-2607; the sequence is ACWVFGFILVVAFAHPGYLLF. Residues 2608 to 2651 are Extracellular-facing; it reads GSVHSSFKSFGDAFLLVTSFFRLEGVARYQDFALEEQTLLLSTY. A helical transmembrane segment spans residues 2652 to 2672; it reads FALFLIGFCVIVRGSTAAVVL. Residues 2673–3029 are Cytoplasmic-facing; that stretch reads HGIRCLGKRR…PVGQRVVSAM (357 aa). The segment at 2704 to 2726 is disordered; the sequence is KKPKKPRPNSVSDLEETDDEDDL. Positions 2716-2726 are enriched in acidic residues; it reads DLEETDDEDDL.

This sequence belongs to the polycystin family. Heterodimer of 2 chains generated by proteolytic processing; the large extracellular N-terminal fragment and the membrane-bound C-terminal fragment predominantly remain associated and non-covalently linked. In terms of processing, autoproteolytically processed at the GPS region of the GAIN-B domain; this cleavage modulates receptor activity. In terms of tissue distribution, component of the acid-insoluble and acid-soluble organic matrix of the aragonitic skeleton (at protein level).

It localises to the membrane. The protein is Polycystin-1-related protein of Acropora millepora (Staghorn coral).